A 363-amino-acid polypeptide reads, in one-letter code: Chorismate synthase (363 aa).

A disordered region spans residues 42-61; it reads QRDLDRRKPGTSRHTTQRQE. NADP(+) contacts are provided by Arg-48 and Arg-54. FMN contacts are provided by residues 125–127, 237–238, Gly-277, 292–296, and Arg-318; these read RSS, NA, and KPTSS.

The protein belongs to the chorismate synthase family. As to quaternary structure, homotetramer. It depends on FMNH2 as a cofactor.

The enzyme catalyses 5-O-(1-carboxyvinyl)-3-phosphoshikimate = chorismate + phosphate. Its pathway is metabolic intermediate biosynthesis; chorismate biosynthesis; chorismate from D-erythrose 4-phosphate and phosphoenolpyruvate: step 7/7. Catalyzes the anti-1,4-elimination of the C-3 phosphate and the C-6 proR hydrogen from 5-enolpyruvylshikimate-3-phosphate (EPSP) to yield chorismate, which is the branch point compound that serves as the starting substrate for the three terminal pathways of aromatic amino acid biosynthesis. This reaction introduces a second double bond into the aromatic ring system. The polypeptide is Chorismate synthase (Pseudomonas aeruginosa (strain LESB58)).